The primary structure comprises 144 residues: Large ribosomal subunit protein uL16 (144 aa).

It belongs to the universal ribosomal protein uL16 family. Part of the 50S ribosomal subunit.

Its function is as follows. Binds 23S rRNA and is also seen to make contacts with the A and possibly P site tRNAs. This is Large ribosomal subunit protein uL16 from Bacillus anthracis (strain A0248).